The chain runs to 344 residues: Polyhomeotic-like protein 2 (344 aa).

Polar residues predominate over residues 1–23; that stretch reads MTSGNGSSPVPTAATGNRTQNGE. The tract at residues 1–28 is disordered; it reads MTSGNGSSPVPTAATGNRTQNGENKPPQ. The HD1 motif lies at 25-53; it reads KPPQAVVKPQILTHFIEGFVIQEGAQPFP. Residues 114–148 form an FCS-type zinc finger; that stretch reads GDGDPPKLKCELCGRVDFEYKFKRSKRFCSMACAK. Zn(2+)-binding residues include C123, C126, C142, and C146. A disordered region spans residues 165–269; it reads RSKLQKPTVA…LHSRDPIAMS (105 aa). Residues 173–183 show a composition bias toward basic residues; it reads VAKHARRRSRK. Residues 216–233 are compositionally biased toward polar residues; the sequence is KLSNSQEDSSRCSDNSSY. Positions 234–248 are enriched in low complexity; the sequence is EEPLSPMSASSSLSR. The region spanning 280 to 344 is the SAM domain; it reads WNVEDVYDFV…YARISMLKDS (65 aa).

As to quaternary structure, component of a PRC1-like complex.

The protein localises to the nucleus. Component of a Polycomb group (PcG) multiprotein PRC1-like complex, a complex class required to maintain the transcriptionally repressive state of many genes, including Hox genes, throughout development. PcG PRC1 complex acts via chromatin remodeling and modification of histones; it mediates monoubiquitination of histone H2A 'Lys-119', rendering chromatin heritably changed in its expressibility. The chain is Polyhomeotic-like protein 2 (phc2) from Xenopus laevis (African clawed frog).